The following is a 454-amino-acid chain: uncharacterized protein (454 aa).

The disordered stretch occupies residues 1 to 25; the sequence is MHGPTSKAISRNVRSVKRPRRAPRP. Residues 14–23 are compositionally biased toward basic residues; that stretch reads RSVKRPRRAP.

Its subcellular location is the cytoplasm. The protein localises to the nucleus. This is an uncharacterized protein from Saccharomyces cerevisiae (strain ATCC 204508 / S288c) (Baker's yeast).